A 631-amino-acid polypeptide reads, in one-letter code: Chimallin (631 aa).

The span at 1–29 (MIRDTATNTTQTQAAPQQAPAQQFTQAPQ) shows a compositional bias: low complexity. Residues 1 to 63 (MIRDTATNTT…FTRSGNVQGG (63 aa)) are disordered. Positions 32 to 59 (PMQSTQSQPTPSYAGTGGINSQFTRSGN) are enriched in polar residues. Homotetramerization regions lie at residues 590–611 (QRFM…QVHS) and 622–631 (QYQTGPSSFY).

The protein belongs to the Phikzvirus chimallin family. As to quaternary structure, homotetramer. The tetrameric protomers further assemble as a square grid.

The protein resides in the host cytoplasm. In terms of biological role, self-assembles to form a proteinaceous shell that encloses the viral DNA and compartmentalizes proteins and DNA during viral infection. This micrometer-scale compartment contains narrow pores and is the site of viral replication, with the proteins involved in DNA replication localized inside. Provides a surface for docking of capsids during packaging. Probably protects the viral genome against host defenses. The polypeptide is Chimallin (Pseudomonas chlororaphis (Pseudomonas chlororaphis phage 201phi2-1)).